Consider the following 284-residue polypeptide: Pantothenate synthetase (284 aa).

30-37 (MGNLHDGH) contacts ATP. His-37 (proton donor) is an active-site residue. Gln-61 contacts (R)-pantoate. Residue Gln-61 participates in beta-alanine binding. An ATP-binding site is contributed by 149-152 (GEKD). Gln-155 contacts (R)-pantoate. ATP is bound by residues Ile-178 and 186–189 (LSSR).

The protein belongs to the pantothenate synthetase family. Homodimer.

It localises to the cytoplasm. It carries out the reaction (R)-pantoate + beta-alanine + ATP = (R)-pantothenate + AMP + diphosphate + H(+). Its pathway is cofactor biosynthesis; (R)-pantothenate biosynthesis; (R)-pantothenate from (R)-pantoate and beta-alanine: step 1/1. Catalyzes the condensation of pantoate with beta-alanine in an ATP-dependent reaction via a pantoyl-adenylate intermediate. This Salmonella typhi protein is Pantothenate synthetase.